The chain runs to 508 residues: Photosystem II CP47 reaction center protein (508 aa).

Transmembrane regions (helical) follow at residues 21–36 (SVHIMHTALVSGWAGS), 101–115 (IVFSGLCFLAAIWHW), 140–156 (GIHLFLSGVACFGFGAF), 203–218 (IAAGTLGILAGLFHLS), 237–252 (VLSSSIAAVFFAAFVV), and 457–472 (SFALLFFFGHIWHGAR).

Belongs to the PsbB/PsbC family. PsbB subfamily. In terms of assembly, PSII is composed of 1 copy each of membrane proteins PsbA, PsbB, PsbC, PsbD, PsbE, PsbF, PsbH, PsbI, PsbJ, PsbK, PsbL, PsbM, PsbT, PsbX, PsbY, PsbZ, Psb30/Ycf12, at least 3 peripheral proteins of the oxygen-evolving complex and a large number of cofactors. It forms dimeric complexes. Binds multiple chlorophylls. PSII binds additional chlorophylls, carotenoids and specific lipids. is required as a cofactor.

The protein resides in the plastid. It localises to the chloroplast thylakoid membrane. In terms of biological role, one of the components of the core complex of photosystem II (PSII). It binds chlorophyll and helps catalyze the primary light-induced photochemical processes of PSII. PSII is a light-driven water:plastoquinone oxidoreductase, using light energy to abstract electrons from H(2)O, generating O(2) and a proton gradient subsequently used for ATP formation. This chain is Photosystem II CP47 reaction center protein, found in Nymphaea alba (White water-lily).